We begin with the raw amino-acid sequence, 290 residues long: ATP synthase gamma chain (290 aa).

Belongs to the ATPase gamma chain family. As to quaternary structure, F-type ATPases have 2 components, CF(1) - the catalytic core - and CF(0) - the membrane proton channel. CF(1) has five subunits: alpha(3), beta(3), gamma(1), delta(1), epsilon(1). CF(0) has three main subunits: a, b and c.

It is found in the cell inner membrane. Functionally, produces ATP from ADP in the presence of a proton gradient across the membrane. The gamma chain is believed to be important in regulating ATPase activity and the flow of protons through the CF(0) complex. The sequence is that of ATP synthase gamma chain from Bacteroides fragilis (strain YCH46).